Here is a 32-residue protein sequence, read N- to C-terminus: Cytochrome b6-f complex subunit 7 (32 aa).

The chain crosses the membrane as a helical span at residues 9 to 27 (AAVFWVLIPVGLLGGVLLL).

The protein belongs to the PetM family. In terms of assembly, the 4 large subunits of the cytochrome b6-f complex are cytochrome b6, subunit IV (17 kDa polypeptide, PetD), cytochrome f and the Rieske protein, while the 4 small subunits are PetG, PetL, PetM and PetN. The complex functions as a dimer.

The protein localises to the cellular thylakoid membrane. Functionally, component of the cytochrome b6-f complex, which mediates electron transfer between photosystem II (PSII) and photosystem I (PSI), cyclic electron flow around PSI, and state transitions. This is Cytochrome b6-f complex subunit 7 from Prochlorococcus marinus (strain NATL1A).